The sequence spans 344 residues: DNA-directed RNA polymerase subunit alpha (344 aa).

The tract at residues 1-246 is alpha N-terminal domain (alpha-NTD); sequence MPMERFLKDF…EFLFPLVDFE (246 aa). The interval 259 to 344 is alpha C-terminal domain (alpha-CTD); that stretch reads ESSNLLDMSI…VLSKNVKISE (86 aa).

The protein belongs to the RNA polymerase alpha chain family. As to quaternary structure, homodimer. The RNAP catalytic core consists of 2 alpha, 1 beta, 1 beta' and 1 omega subunit. When a sigma factor is associated with the core the holoenzyme is formed, which can initiate transcription.

The catalysed reaction is RNA(n) + a ribonucleoside 5'-triphosphate = RNA(n+1) + diphosphate. Functionally, DNA-dependent RNA polymerase catalyzes the transcription of DNA into RNA using the four ribonucleoside triphosphates as substrates. The sequence is that of DNA-directed RNA polymerase subunit alpha from Borreliella afzelii (strain PKo) (Borrelia afzelii).